The following is a 326-amino-acid chain: Apoptosis facilitator Bcl-2-like protein 14 (326 aa).

Serine 44 bears the Phosphoserine mark. Residues 100-147 (AEKEEDSQSSPPEICAQAQRSGVPQARPRSPKWPRSRSSMDQRLEHKA) form a disordered region. Over residues 137-147 (SSMDQRLEHKA) the composition is skewed to basic and acidic residues. Residues 211 to 225 (IVELLKYSGEQLERE) carry the BH3 motif. Residues 307–314 (WIQQHGGW) carry the BH2 motif.

Belongs to the Bcl-2 family. In terms of processing, phosphorylated by MELK, leading to inhibit its pro-apoptotic function.

It localises to the cytoplasm. Plays a role in apoptosis. The protein is Apoptosis facilitator Bcl-2-like protein 14 (BCL2L14) of Bos taurus (Bovine).